Consider the following 705-residue polypeptide: CAP-Gly domain-containing linker protein 4 (705 aa).

ANK repeat units follow at residues 65 to 101, 149 to 180, and 186 to 215; these read TSVS…NVND, TNMN…DVDA, and NFGT…NPAF. Residues 303-345 enclose the CAP-Gly 1 domain; the sequence is GTTEFASGQWAGIELDEPEGKNNGSVGKVQYFKCAPKYGIFAP. Disordered regions lie at residues 391–410 and 431–479; these read MTSK…PGEE and TSSL…ANNS. Polar residues predominate over residues 441 to 452; it reads PKKQNAISSNKK. Residues 455–479 are compositionally biased toward low complexity; the sequence is SKSPSLSSRASAGLNSSATSTANNS. The CAP-Gly 2 domain occupies 505–547; sequence GTTNFAPGYWYGIELEKPHGKNDGSVGGVQYFSCSPRYGIFAP. Phosphoserine occurs at positions 557 and 609. The region spanning 644–686 is the CAP-Gly 3 domain; it reads GPTDFASGIWLGLELRSAKGKNDGSVGDKRYFTCKPNHGVLVR.

This chain is CAP-Gly domain-containing linker protein 4 (CLIP4), found in Homo sapiens (Human).